Consider the following 190-residue polypeptide: MKCIVGLGNIGKRFELTRHNIGFEVVDYILEKNNFSLDKQKFKGAYTIERMNGDKVLFIEPMTMMNLSGEAVAPIMDYYNVNPEDLIVLYDDLDLEQGQVRLRQKGSAGGHNGMKSIIKMLGTDQFKRIRIGVGRPTNGMTVPDYVLQRFSNDEMVTMEKVIEHAGRAIEKFVETSRFDHVMNEFNGEVK.

F14 serves as a coordination point for tRNA. H19 acts as the Proton acceptor in catalysis. Residues M64, N66, and N112 each contribute to the tRNA site.

This sequence belongs to the PTH family. As to quaternary structure, monomer.

It is found in the cytoplasm. It catalyses the reaction an N-acyl-L-alpha-aminoacyl-tRNA + H2O = an N-acyl-L-amino acid + a tRNA + H(+). Its function is as follows. Hydrolyzes ribosome-free peptidyl-tRNAs (with 1 or more amino acids incorporated), which drop off the ribosome during protein synthesis, or as a result of ribosome stalling. In terms of biological role, catalyzes the release of premature peptidyl moieties from peptidyl-tRNA molecules trapped in stalled 50S ribosomal subunits, and thus maintains levels of free tRNAs and 50S ribosomes. This is Peptidyl-tRNA hydrolase from Staphylococcus aureus (strain bovine RF122 / ET3-1).